The sequence spans 173 residues: Secreted RxLR effector protein RXLR-C12 (173 aa).

Positions 1 to 18 are cleaved as a signal peptide; the sequence is MLQFATAFLAISANVVMT. Positions 41–55 match the RxLR-dEER motif; the sequence is RRLRTHEIGTVPEER. A glycan (N-linked (GlcNAc...) asparagine) is linked at Asn155.

Belongs to the RxLR effector family.

Its subcellular location is the secreted. The protein localises to the host cytoplasm. It is found in the host nucleus. Functionally, secreted effector that suppresses pattern-triggered immunity (PTI) in plant host. This chain is Secreted RxLR effector protein RXLR-C12, found in Plasmopara halstedii (Downy mildew of sunflower).